Here is a 304-residue protein sequence, read N- to C-terminus: Sulfate adenylyltransferase subunit 2 (304 aa).

It belongs to the PAPS reductase family. CysD subfamily. In terms of assembly, heterodimer composed of CysD, the smaller subunit, and CysN.

The enzyme catalyses sulfate + ATP + H(+) = adenosine 5'-phosphosulfate + diphosphate. The protein operates within sulfur metabolism; hydrogen sulfide biosynthesis; sulfite from sulfate: step 1/3. In terms of biological role, with CysN forms the ATP sulfurylase (ATPS) that catalyzes the adenylation of sulfate producing adenosine 5'-phosphosulfate (APS) and diphosphate, the first enzymatic step in sulfur assimilation pathway. APS synthesis involves the formation of a high-energy phosphoric-sulfuric acid anhydride bond driven by GTP hydrolysis by CysN coupled to ATP hydrolysis by CysD. This chain is Sulfate adenylyltransferase subunit 2, found in Acinetobacter baumannii (strain SDF).